A 228-amino-acid polypeptide reads, in one-letter code: 5'-methylthioadenosine/S-adenosylhomocysteine nucleosidase (228 aa).

Glu11 serves as the catalytic Proton acceptor. Residues Gly77, Ile151, and 172-173 (ME) each bind substrate. The Proton donor role is filled by Asp196.

The protein belongs to the PNP/UDP phosphorylase family. MtnN subfamily.

The catalysed reaction is S-adenosyl-L-homocysteine + H2O = S-(5-deoxy-D-ribos-5-yl)-L-homocysteine + adenine. It carries out the reaction S-methyl-5'-thioadenosine + H2O = 5-(methylsulfanyl)-D-ribose + adenine. The enzyme catalyses 5'-deoxyadenosine + H2O = 5-deoxy-D-ribose + adenine. It functions in the pathway amino-acid biosynthesis; L-methionine biosynthesis via salvage pathway; S-methyl-5-thio-alpha-D-ribose 1-phosphate from S-methyl-5'-thioadenosine (hydrolase route): step 1/2. Functionally, catalyzes the irreversible cleavage of the glycosidic bond in both 5'-methylthioadenosine (MTA) and S-adenosylhomocysteine (SAH/AdoHcy) to adenine and the corresponding thioribose, 5'-methylthioribose and S-ribosylhomocysteine, respectively. Also cleaves 5'-deoxyadenosine, a toxic by-product of radical S-adenosylmethionine (SAM) enzymes, into 5-deoxyribose and adenine. This is 5'-methylthioadenosine/S-adenosylhomocysteine nucleosidase from Staphylococcus aureus (strain bovine RF122 / ET3-1).